The following is a 25-amino-acid chain: Caerin-1.10 (25 aa).

Leucine 25 bears the Leucine amide mark.

It belongs to the frog skin active peptide (FSAP) family. Caerin subfamily. As to expression, expressed by the skin dorsal glands.

The protein resides in the secreted. Its function is as follows. Antibacterial peptide with wide spectrum of activity. The chain is Caerin-1.10 from Litoria rothii (Roth's tree frog).